We begin with the raw amino-acid sequence, 234 residues long: MSTYGKVYLVSGNKGKLAEVQSYLAHANIVVEAVKFDLPETQNSSAEKISWDKAVEAYRVVNKMPVGEPLRHGGTPVLVDDTSLEFDALCGLPGPYIKWFLDRLGVEGLLKMVKGFAAPGEKDSGAAAPAHRGANAVCIISLCHGVEEATGQPLVEQFRGVCRGALPPVPRGGVGFGWDSIFAPEAQTPAYAKTFAEMSVEEKNTLSHRAKALKMLTEYLKTHALELRGTKLVA.

11–16 (SGNKGK) lines the ITP pocket. Position 40 (Glu40) interacts with Mg(2+). Residues Lys53, 81 to 82 (DT), Lys98, 176 to 179 (FGWD), Lys203, and 208 to 209 (HR) each bind ITP.

It belongs to the HAM1 NTPase family. As to quaternary structure, homodimer. Mg(2+) is required as a cofactor. It depends on Mn(2+) as a cofactor.

Its subcellular location is the cytoplasm. The catalysed reaction is ITP + H2O = IMP + diphosphate + H(+). The enzyme catalyses dITP + H2O = dIMP + diphosphate + H(+). It catalyses the reaction XTP + H2O = XMP + diphosphate + H(+). Pyrophosphatase that hydrolyzes non-canonical purine nucleotides such as inosine triphosphate (ITP), deoxyinosine triphosphate (dITP) or xanthosine 5'-triphosphate (XTP) to their respective monophosphate derivatives. The enzyme does not distinguish between the deoxy- and ribose forms. Probably excludes non-canonical purines from RNA and DNA precursor pools, thus preventing their incorporation into RNA and DNA and avoiding chromosomal lesions. This Leishmania major protein is Inosine triphosphate pyrophosphatase.